The primary structure comprises 243 residues: Juxtaposed with another zinc finger protein 1 (243 aa).

The C2H2-type 1 zinc finger occupies Asn12–His37. The interval Asp39–Lys79 is required for interaction with NR2C2. Residues Ser89–Leu108 are compositionally biased toward polar residues. Residues Ser89–Glu151 are disordered. Phosphothreonine occurs at positions 109 and 113. Residues Pro118–Ser130 show a composition bias toward low complexity. Residues Glu131 to Trp148 show a composition bias toward acidic residues. Residues Phe173 to His198 form a C2H2-type 2 zinc finger. The C2H2-type 3; degenerate zinc finger occupies Phe208 to His230.

Interacts with NR2C2 (via ligand-binding region). As to expression, highest expression in testis with moderate levels in colon, placenta, prostate and ovary and low levels in brain, spleen, liver and small intestine.

The protein localises to the nucleus. Its function is as follows. Acts as a transcriptional corepressor of orphan nuclear receptor NR2C2. Inhibits expression of the gluconeogenesis enzyme PCK2 through inhibition of NR2C2 activity. Also involved in transcriptional activation of NAMPT by promoting expression of PPARA and PPARD. Plays a role in lipid metabolism by suppressing lipogenesis, increasing lipolysis and decreasing lipid accumulation in adipose tissue. Plays a role in glucose homeostasis by improving glucose metabolism and insulin sensitivity. The sequence is that of Juxtaposed with another zinc finger protein 1 from Homo sapiens (Human).